A 148-amino-acid polypeptide reads, in one-letter code: Transcriptional regulator MraZ (148 aa).

SpoVT-AbrB domains follow at residues 5 to 51 (ATSL…PLPA) and 80 to 123 (AEDV…SMEA).

Belongs to the MraZ family. As to quaternary structure, forms oligomers.

Its subcellular location is the cytoplasm. The protein resides in the nucleoid. The polypeptide is Transcriptional regulator MraZ (Methylobacillus flagellatus (strain ATCC 51484 / DSM 6875 / VKM B-1610 / KT)).